The following is a 326-amino-acid chain: Cinnamoyl-CoA reductase CAD2 (326 aa).

Residues 14–20 (GASGYIA), R39, K46, 66–67 (NL), and 86–88 (TAS) each bind NADP(+). 4 residues coordinate (E)-coniferaldehyde: S130, Y136, R141, and Y165. NADP(+) contacts are provided by residues Y165, K169, 192 to 195 (PAMV), and S207. The Proton donor role is filled by K169. Residues M194, S207, F226, V257, and Y290 each coordinate (E)-coniferaldehyde.

It belongs to the NAD(P)-dependent epimerase/dehydratase family. Dihydroflavonol-4-reductase subfamily.

Its subcellular location is the cytoplasm. It carries out the reaction (E)-cinnamaldehyde + NADP(+) + CoA = (E)-cinnamoyl-CoA + NADPH + H(+). The catalysed reaction is (E)-coniferaldehyde + NADP(+) + CoA = (E)-feruloyl-CoA + NADPH + H(+). It catalyses the reaction (E)-4-coumaraldehyde + NADP(+) + CoA = (E)-4-coumaroyl-CoA + NADPH + H(+). Its pathway is aromatic compound metabolism; phenylpropanoid biosynthesis. Involved in lignin biosynthesis. Regulates the monolignol composition by catalyzing the conversion of cinnamoyl-CoAs into their corresponding cinnamaldehydes. Can use coumaraldehyde and coniferaldehyde as substrates, but barely sinapaldehyde. This Medicago truncatula (Barrel medic) protein is Cinnamoyl-CoA reductase CAD2.